The chain runs to 504 residues: MEPAGPAPGRLGPLLCLLLAASCAWSGVAGEEELQVIQPDKSVLVAAGETATLRCTATSLIPVGPIQWFRGAGPGRELIYNQKEGHFPRVTTVSDLTKRNNMDFSIRIGNITPADAGTYYCVKFRKGSPDDVEFKSGAGTELSVRAKPSAPVVSGPAARATPQHTVSFTCESHGFSPRDITLKWFKNGNELSDFQTNVDPVGESVSYSIHSTAKVVLTREDVHSQVICEVAHVTLQGDPLRGTANLSETIRVPPTLEVTQQPVRAENQVNVTCQVRKFYPQRLQLTWLENGNVSRTETASTVTENKDGTYNWMSWLLVNVSAHRDDVKLTCQVEHDGQPAVSKSHDLKVSAHPKEQGSNTAAENTGSNERNIYIVVGVVCTLLVALLMAALYLVRIRQKKAQGSTSSTRLHEPEKNAREITQDTNDITYADLNLPKGKKPAPQAAEPNNHTEYASIQTSPQPASEDTLTYADLDMVHLNRTPKQPAPKPEPSFSEYASVQVPRK.

The first 30 residues, 1–30 (MEPAGPAPGRLGPLLCLLLAASCAWSGVAG), serve as a signal peptide directing secretion. Residues 31 to 373 (EEELQVIQPD…NTGSNERNIY (343 aa)) lie on the Extracellular side of the membrane. The Ig-like V-type domain maps to 32-137 (EELQVIQPDK…SPDDVEFKSG (106 aa)). 2 cysteine pairs are disulfide-bonded: C55/C121 and C170/C228. Ig-like C1-type domains are found at residues 148–247 (PSAP…ANLS) and 254–348 (PTLE…HDLK). N-linked (GlcNAc...) asparagine glycosylation is found at N245, N270, N292, and N319. A disulfide bridge links C273 with C331. A compositionally biased stretch (basic and acidic residues) spans 336 to 355 (DGQPAVSKSHDLKVSAHPKE). Residues 336–364 (DGQPAVSKSHDLKVSAHPKEQGSNTAAEN) are disordered. Residues 374 to 394 (IVVGVVCTLLVALLMAALYLV) traverse the membrane as a helical segment. Topologically, residues 395–504 (RIRQKKAQGS…EYASVQVPRK (110 aa)) are cytoplasmic. The segment at 402–504 (QGSTSSTRLH…EYASVQVPRK (103 aa)) is disordered. A compositionally biased stretch (basic and acidic residues) spans 409-421 (RLHEPEKNAREIT). Residue Y429 is modified to Phosphotyrosine; by Tyr-kinases. Residues 429-432 (YADL) carry the SH2-binding motif. The SH3-binding motif lies at 439–444 (KPAPQA). Polar residues predominate over residues 446–467 (EPNNHTEYASIQTSPQPASEDT). Phosphotyrosine; by Tyr-kinases occurs at positions 453 and 470. 3 consecutive short sequence motifs (SH2-binding) follow at residues 453-456 (YASI), 470-473 (YADL), and 496-499 (YASV). Y496 bears the Phosphotyrosine mark.

In terms of assembly, binds PTPN11 when tyrosine-phosphorylated, except in macrophages, where it primarily binds PTPN6. Binds GRB2 in vitro. Binds FGR. Binds JAK2 irrespective of its phosphorylation status and forms a stable complex. Binds SCAP1 and/or SCAP2. The resulting complex recruits FYB1. Binds PTK2B. Interacts with TRIM2. N-glycosylated. Post-translationally, phosphorylated on tyrosine residues in response to stimulation with EGF, growth hormone, insulin and PDGF. Dephosphorylated by PTPN11. In terms of tissue distribution, ubiquitous. Highly expressed in brain. Detected on myeloid cells, but not T-cells. Detected at lower levels in heart, placenta, lung, testis, ovary, colon, liver, small intestine, prostate, spleen, kidney, skeletal muscle and pancreas.

It is found in the membrane. Functionally, immunoglobulin-like cell surface receptor for CD47. Acts as docking protein and induces translocation of PTPN6, PTPN11 and other binding partners from the cytosol to the plasma membrane. Supports adhesion of cerebellar neurons, neurite outgrowth and glial cell attachment. May play a key role in intracellular signaling during synaptogenesis and in synaptic function. Involved in the negative regulation of receptor tyrosine kinase-coupled cellular responses induced by cell adhesion, growth factors or insulin. Mediates negative regulation of phagocytosis, mast cell activation and dendritic cell activation. CD47 binding prevents maturation of immature dendritic cells and inhibits cytokine production by mature dendritic cells. Plays a role in antiviral immunity and limits new world arenavirus infection by decreasing virus internalization. Receptor for THBS1. Interaction with THBS1 stimulates phosphorylation of SIRPA. In response to THBS1, involved in ROS signaling in non-phagocytic cells, stimulating NADPH oxidase-derived ROS production. This chain is Tyrosine-protein phosphatase non-receptor type substrate 1 (SIRPA), found in Homo sapiens (Human).